A 679-amino-acid chain; its full sequence is Altered inheritance of mitochondria protein 21 (679 aa).

The tract at residues 1 to 85 (MPSEVTPKVP…LQRPVRRSTT (85 aa)) is disordered. Over residues 9–19 (VPERPSRRKTS) the composition is skewed to basic and acidic residues. Position 18 is a phosphothreonine (Thr-18). Phosphoserine is present on Ser-36. The residue at position 58 (Thr-58) is a Phosphothreonine. Ser-70 is subject to Phosphoserine. Thr-85 is subject to Phosphothreonine. The residue at position 104 (Ser-104) is a Phosphoserine. Over residues 110–119 (NIHNVSRKKS) the composition is skewed to basic residues. Disordered stretches follow at residues 110–522 (NIHN…EKIE), 549–580 (IDTT…PNKM), and 593–679 (EKLP…FHSL). 2 stretches are compositionally biased toward polar residues: residues 133 to 149 (QNGQ…TNPS) and 164 to 178 (SAIS…SNNE). The span at 179–213 (VTEHSDSEDLTEKQKVHAALDNEAGDRSHFEEKLI) shows a compositional bias: basic and acidic residues. Residues Ser-183, Ser-206, and Ser-231 each carry the phosphoserine modification. Basic and acidic residues predominate over residues 243-272 (SDDKAEKFTKHPESSLEELQKHQEQQEEKI). The residue at position 277 (Thr-277) is a Phosphothreonine. Ser-284 carries the phosphoserine modification. The segment covering 296–323 (EVNSQPQGPSDTETVIAATSSNVPSQIA) has biased composition (polar residues). Ser-324 is subject to Phosphoserine. Composition is skewed to basic and acidic residues over residues 339-361 (KKDF…RVSE) and 372-383 (EESKIPKIPSER). The tract at residues 383-396 (RPKRRAPPPVPKKP) is interaction with SH3 domain of ABP1. Composition is skewed to polar residues over residues 414 to 427 (DLHN…TTAS) and 437 to 452 (SSIT…TSKL). Residues 471–482 (LEKKLSSPDTES) show a composition bias toward basic and acidic residues. Residues 501 to 512 (RRGRGPRGRKLP) are compositionally biased toward basic residues. The residue at position 552 (Thr-552) is a Phosphothreonine. Positions 556–576 (QAERALDEKSKSIPEEQREQS) are enriched in basic and acidic residues. Residue Ser-576 is modified to Phosphoserine. Residues 603 to 613 (PLSQLPQTNAV) show a composition bias toward polar residues. 8 positions are modified to phosphoserine: Ser-620, Ser-623, Ser-625, Ser-627, Ser-667, Ser-671, Ser-675, and Ser-678. Residues 667–679 (SALHSEEASFHSL) are compositionally biased toward basic and acidic residues.

This sequence belongs to the AIM21 family. Interacts with ribosomes. Interacts with ABP1.

The protein localises to the cytoplasm. The protein resides in the cytoskeleton. It localises to the actin patch. In terms of biological role, involved in mitochondrial migration along actin filaments. This Saccharomyces cerevisiae (strain ATCC 204508 / S288c) (Baker's yeast) protein is Altered inheritance of mitochondria protein 21 (AIM21).